Consider the following 335-residue polypeptide: Glucokinase (335 aa).

11–16 (ADIGGT) provides a ligand contact to ATP.

It belongs to the bacterial glucokinase family.

It is found in the cytoplasm. The enzyme catalyses D-glucose + ATP = D-glucose 6-phosphate + ADP + H(+). In Xanthomonas oryzae pv. oryzae (strain MAFF 311018), this protein is Glucokinase.